The chain runs to 87 residues: Sec-independent protein translocase protein TatA (87 aa).

Residues G3–A23 form a helical membrane-spanning segment. The disordered stretch occupies residues M47–A87. A compositionally biased stretch (low complexity) spans P52–A87.

The protein belongs to the TatA/E family. The Tat system comprises two distinct complexes: a TatABC complex, containing multiple copies of TatA, TatB and TatC subunits, and a separate TatA complex, containing only TatA subunits. Substrates initially bind to the TatABC complex, which probably triggers association of the separate TatA complex to form the active translocon.

It localises to the cell membrane. In terms of biological role, part of the twin-arginine translocation (Tat) system that transports large folded proteins containing a characteristic twin-arginine motif in their signal peptide across membranes. TatA could form the protein-conducting channel of the Tat system. The polypeptide is Sec-independent protein translocase protein TatA (Nocardia farcinica (strain IFM 10152)).